A 795-amino-acid chain; its full sequence is Lon protease (795 aa).

One can recognise a Lon N-terminal domain in the interval 7–213 (PQILVVRNQV…KIIGSGIEDL (207 aa)). Residue 379 to 386 (GPPGVGKS) coordinates ATP. In terms of domain architecture, Lon proteolytic spans 615–795 (DALPGIVNGM…YKDIYNKIFN (181 aa)). Active-site residues include Ser-702 and Lys-745.

This sequence belongs to the peptidase S16 family. Homohexamer. Organized in a ring with a central cavity.

The protein resides in the cytoplasm. The catalysed reaction is Hydrolysis of proteins in presence of ATP.. Its function is as follows. ATP-dependent serine protease that mediates the selective degradation of mutant and abnormal proteins as well as certain short-lived regulatory proteins. Required for cellular homeostasis and for survival from DNA damage and developmental changes induced by stress. Degrades polypeptides processively to yield small peptide fragments that are 5 to 10 amino acids long. Binds to DNA in a double-stranded, site-specific manner. The protein is Lon protease of Mycoplasma pneumoniae (strain ATCC 29342 / M129 / Subtype 1) (Mycoplasmoides pneumoniae).